We begin with the raw amino-acid sequence, 550 residues long: Cyclopentanone 1,2-monooxygenase (550 aa).

Residues 31 to 32 (FT), Asp-51, Trp-60, Asp-71, Tyr-77, and Val-123 each bind FAD.

The protein belongs to the FAD-binding monooxygenase family. Homotetramer. FAD serves as cofactor.

It carries out the reaction cyclopentanone + NADPH + O2 + H(+) = 5-valerolactone + NADP(+) + H2O. It participates in alcohol metabolism; cyclopentanol degradation; 5-valerolactone from cyclopentanol: step 2/2. Its function is as follows. Catalyzes a Baeyer-Villiger oxidation reaction, i.e. the insertion of an oxygen atom into a carbon-carbon bond adjacent to a carbonyl, which converts ketones to esters or lactones using NADPH as an electron donor. Converts cyclopentanone to 5-valerolactone, a step in the degradation pathway of cyclopentanol. Besides cycloalkanones, can also act on methylated and other alkylated cycloalkanones, and on methylated cycloalkenones, with high enantioselectivity in some cases. Cannot use NADH instead of NADPH. This chain is Cyclopentanone 1,2-monooxygenase (cpnB), found in Comamonas sp. (strain NCIMB 9872).